A 479-amino-acid chain; its full sequence is Putative L-cysteine desulfhydrase 2 (479 aa).

The tract at residues 1–36 (MASLQSGGDAAANGVDADVDGAASPPSAKRPRAGAG) is disordered. A compositionally biased stretch (low complexity) spans 7–36 (GGDAAANGVDADVDGAASPPSAKRPRAGAG). Lys-270 bears the N6-(pyridoxal phosphate)lysine mark.

The protein belongs to the class-V pyridoxal-phosphate-dependent aminotransferase family. Pyridoxal 5'-phosphate is required as a cofactor.

It carries out the reaction L-cysteine + H2O = hydrogen sulfide + pyruvate + NH4(+) + H(+). Its function is as follows. Catalyzes the production of hydrogen sulfide (H2S) from cysteine. This Oryza sativa subsp. japonica (Rice) protein is Putative L-cysteine desulfhydrase 2.